Here is a 345-residue protein sequence, read N- to C-terminus: Ferrochelatase (345 aa).

Fe cation-binding residues include His215 and Glu296.

This sequence belongs to the ferrochelatase family.

It is found in the cytoplasm. The enzyme catalyses heme b + 2 H(+) = protoporphyrin IX + Fe(2+). The protein operates within porphyrin-containing compound metabolism; protoheme biosynthesis; protoheme from protoporphyrin-IX: step 1/1. Functionally, catalyzes the ferrous insertion into protoporphyrin IX. The sequence is that of Ferrochelatase from Rhodopseudomonas palustris (strain BisB5).